Reading from the N-terminus, the 173-residue chain is Gamma-crystallin S-2 (173 aa).

Beta/gamma crystallin 'Greek key' domains follow at residues 2–40 (GKII…RVES) and 41–83 (DWWV…RVPT). Residues 84–88 (HTQRP) form a connecting peptide region. 2 Beta/gamma crystallin 'Greek key' domains span residues 89 to 129 (YRMR…HVMG) and 130 to 172 (AYWI…RRIM).

The protein belongs to the beta/gamma-crystallin family.

Crystallins are the dominant structural components of the vertebrate eye lens. This chain is Gamma-crystallin S-2 (GS-2), found in Chiloscyllium indicum (Slender bamboo shark).